Here is a 184-residue protein sequence, read N- to C-terminus: UPF0149 protein PSPTO_5224 (184 aa).

Belongs to the UPF0149 family.

The chain is UPF0149 protein PSPTO_5224 from Pseudomonas syringae pv. tomato (strain ATCC BAA-871 / DC3000).